The primary structure comprises 331 residues: Major ferric iron-binding protein (331 aa).

Residues 1 to 22 (MKTSIRYALLAAALTAATPALA) form the signal peptide. 4 residues coordinate Fe cation: H31, E79, Y217, and Y218.

This sequence belongs to the bacterial solute-binding protein 1 family.

The protein localises to the periplasm. Its function is as follows. This protein may be a central component in the iron-acquisition system. The polypeptide is Major ferric iron-binding protein (fbpA) (Neisseria meningitidis serogroup B (strain ATCC BAA-335 / MC58)).